We begin with the raw amino-acid sequence, 608 residues long: ESX-3 secretion system protein EccA3 (608 aa).

Residues 284-303 form a disordered region; the sequence is EARSDPWDPETEPSEAEFVD. Positions 290-301 are enriched in acidic residues; the sequence is WDPETEPSEAEF. Position 365–372 (365–372) interacts with ATP; that stretch reads GPPGTGKT.

It belongs to the CbxX/CfxQ family. As to quaternary structure, part of the ESX-3 / type VII secretion system (T7SS), which is composed of cytosolic and membrane components.

It is found in the cytoplasm. Functionally, part of the ESX-3 specialized secretion system, which is required for siderophore-mediated iron acquisition and for the secretion of EsxH and EsxG. EccA3 exhibits ATPase activity and may provide energy for the export of ESX-3 substrates. This chain is ESX-3 secretion system protein EccA3, found in Mycolicibacterium smegmatis (strain ATCC 700084 / mc(2)155) (Mycobacterium smegmatis).